Reading from the N-terminus, the 120-residue chain is UPF0231 protein Spro_4007 (120 aa).

It belongs to the UPF0231 family.

This is UPF0231 protein Spro_4007 from Serratia proteamaculans (strain 568).